The sequence spans 464 residues: MPSSLTPQQAAELNKSIIAYLSAHGLAETLAAFRKESDFPDNMFDATAAKQYENLLERKWTSNSTLMKKLLALESHNKALRNELNSTRPSFLNRNADVNDWLPQHPIRSLESHRDSINCIAFHPKYSLIASGSGDLTIRIWDWEDSTLERTLKGHTMAVCDVDYGDTSSGILLASCSSDFTIKLWDTTDDYKNVKTLRGHDHIVSAVRFIPSGNLLASASRDMKVILWNVINGYRVKTIEDHTGWVRDISPSFDGQFLLSTGDDMTVRLWEISASQPICKFTATGHENRILCCAVAPATSFRYLASFLESRGSTIAAEITATGSRDKSIKLWDSHGRCIMTLTGHASWVRAIAFHPGGKYLLSVSDDKTMRCWDLSQQGRCVKSISNAHDGFITCLKWVPGIAKDTRNGTMTISYQRKGSAELPRSKLDEVGQPGVQIRCVLATGGEDQKIRVFALQANDRSHK.

In terms of domain architecture, LisH spans 9 to 41 (QAAELNKSIIAYLSAHGLAETLAAFRKESDFPD). The stretch at 63 to 88 (NSTLMKKLLALESHNKALRNELNSTR) forms a coiled coil. 8 WD repeats span residues 112 to 151 (SHRD…LERT), 154 to 195 (GHTM…KNVK), 199 to 238 (GHDH…RVKT), 241 to 280 (DHTG…PICK), 285 to 343 (GHEN…MTLT), 344 to 383 (GHAS…RCVK), 388 to 424 (AHDG…AELP), and 426 to 464 (SKLD…RSHK).

The protein belongs to the WD repeat LIS1/nudF family. In terms of assembly, self-associates. Interacts with nudE and dynein.

It localises to the cytoplasm. The protein localises to the cytoskeleton. Its subcellular location is the spindle pole. In terms of biological role, positively regulates the activity of the minus-end directed microtubule motor protein dynein. May enhance dynein-mediated microtubule sliding by targeting dynein to the microtubule plus end. Required for nuclear migration during vegetative growth as well as development. Required for retrograde early endosome (EE) transport from the hyphal tip. Required for localization of dynein to the mitotic spindle poles. Recruits additional proteins to the dynein complex at SPBs. The polypeptide is Nuclear distribution protein nudF 2 (Penicillium rubens (strain ATCC 28089 / DSM 1075 / NRRL 1951 / Wisconsin 54-1255) (Penicillium chrysogenum)).